The sequence spans 414 residues: Diaminopimelate decarboxylase (414 aa).

Lys-52 carries the N6-(pyridoxal phosphate)lysine modification. Pyridoxal 5'-phosphate contacts are provided by residues Gly-231 and 265–268 (EPGR). Substrate-binding residues include Arg-268, Arg-304, and Tyr-308. The active-site Proton donor is the Cys-334. 2 residues coordinate substrate: Glu-335 and Tyr-362. Tyr-362 contacts pyridoxal 5'-phosphate.

The protein belongs to the Orn/Lys/Arg decarboxylase class-II family. LysA subfamily. In terms of assembly, homodimer. The cofactor is pyridoxal 5'-phosphate.

The enzyme catalyses meso-2,6-diaminopimelate + H(+) = L-lysine + CO2. The protein operates within amino-acid biosynthesis; L-lysine biosynthesis via DAP pathway; L-lysine from DL-2,6-diaminopimelate: step 1/1. In terms of biological role, specifically catalyzes the decarboxylation of meso-diaminopimelate (meso-DAP) to L-lysine. The chain is Diaminopimelate decarboxylase from Neisseria meningitidis serogroup B (strain ATCC BAA-335 / MC58).